The sequence spans 382 residues: S-adenosylmethionine synthase (382 aa).

His16 provides a ligand contact to ATP. Asp18 provides a ligand contact to Mg(2+). Residue Glu44 participates in K(+) binding. Glu57 and Gln100 together coordinate L-methionine. The interval 100–110 (QSADIAIGVDE) is flexible loop. Residues 165–167 (DAK), Asp240, 246–247 (RK), Ala263, and Lys267 contribute to the ATP site. Asp240 is a binding site for L-methionine. Lys271 is an L-methionine binding site.

It belongs to the AdoMet synthase family. In terms of assembly, homotetramer; dimer of dimers. Mg(2+) serves as cofactor. The cofactor is K(+).

It localises to the cytoplasm. The catalysed reaction is L-methionine + ATP + H2O = S-adenosyl-L-methionine + phosphate + diphosphate. It participates in amino-acid biosynthesis; S-adenosyl-L-methionine biosynthesis; S-adenosyl-L-methionine from L-methionine: step 1/1. Its function is as follows. Catalyzes the formation of S-adenosylmethionine (AdoMet) from methionine and ATP. The overall synthetic reaction is composed of two sequential steps, AdoMet formation and the subsequent tripolyphosphate hydrolysis which occurs prior to release of AdoMet from the enzyme. The protein is S-adenosylmethionine synthase of Alcanivorax borkumensis (strain ATCC 700651 / DSM 11573 / NCIMB 13689 / SK2).